A 579-amino-acid polypeptide reads, in one-letter code: Insulin-like growth factor 2 mRNA-binding protein 3 (579 aa).

RRM domains are found at residues 2 to 75 (NKLY…HSVP) and 81 to 156 (RKLQ…YIPD). The tract at residues 160–192 (AQQNPLQQPRGRRGLGQRGSSRQGSPGSVSKQK) is disordered. The segment covering 177 to 187 (RGSSRQGSPGS) has biased composition (low complexity). Ser-184 is modified (phosphoserine). 3 consecutive KH domains span residues 195 to 260 (DLPL…CKSI), 276 to 343 (EIPL…EEEI), and 405 to 470 (TETV…QGRI). Residues Lys-450 and Lys-475 each participate in a glycyl lysine isopeptide (Lys-Gly) (interchain with G-Cter in SUMO2) cross-link. The KH 4 domain occupies 487-553 (KLEAHIRVPS…YACQVAQRKI (67 aa)). At Thr-528 the chain carries Phosphothreonine.

This sequence belongs to the RRM IMP/VICKZ family. As to quaternary structure, can form homooligomers and heterooligomers with IGF2BP1 and IGF2BP3 in an RNA-dependent manner. Interacts with IGF2BP1. Interacts with ELAVL1, DHX9, HNRNPU, MATR3 and PABPC1. As to expression, expressed in fetal liver, fetal lung, fetal kidney, fetal thymus, fetal placenta, fetal follicles of ovary and gonocytes of testis, growing oocytes, spermatogonia and semen (at protein level). Expressed in cervix adenocarcinoma, in testicular, pancreatic and renal-cell carcinomas (at protein level). Expressed ubiquitously during fetal development at 8 and 14 weeks of gestation. Expressed in ovary, testis, brain, placenta, pancreatic cancer tissues and pancreatic cancer cell lines.

It is found in the nucleus. Its subcellular location is the cytoplasm. It localises to the P-body. The protein resides in the stress granule. RNA-binding factor that may recruit target transcripts to cytoplasmic protein-RNA complexes (mRNPs). This transcript 'caging' into mRNPs allows mRNA transport and transient storage. It also modulates the rate and location at which target transcripts encounter the translational apparatus and shields them from endonuclease attacks or microRNA-mediated degradation. Preferentially binds to N6-methyladenosine (m6A)-containing mRNAs and increases their stability. Binds to the 3'-UTR of CD44 mRNA and stabilizes it, hence promotes cell adhesion and invadopodia formation in cancer cells. Binds to beta-actin/ACTB and MYC transcripts. Increases MYC mRNA stability by binding to the coding region instability determinant (CRD) and binding is enhanced by m6A-modification of the CRD. Binds to the 5'-UTR of the insulin-like growth factor 2 (IGF2) mRNAs. In Homo sapiens (Human), this protein is Insulin-like growth factor 2 mRNA-binding protein 3 (IGF2BP3).